The chain runs to 433 residues: Adenylosuccinate synthetase (433 aa).

GTP-binding positions include glycine 11–lysine 17 and glycine 39–threonine 41. Aspartate 12 serves as the catalytic Proton acceptor. Residues aspartate 12 and glycine 39 each coordinate Mg(2+). IMP-binding positions include aspartate 12–lysine 15, asparagine 37–histidine 40, threonine 134, arginine 148, asparagine 230, threonine 245, and arginine 309. Histidine 40 serves as the catalytic Proton donor. Substrate is bound at residue valine 305 to arginine 311. GTP contacts are provided by residues arginine 311, lysine 337–aspartate 339, and glycine 419–glycine 421.

This sequence belongs to the adenylosuccinate synthetase family. In terms of assembly, homodimer. Requires Mg(2+) as cofactor.

It is found in the cytoplasm. The catalysed reaction is IMP + L-aspartate + GTP = N(6)-(1,2-dicarboxyethyl)-AMP + GDP + phosphate + 2 H(+). The protein operates within purine metabolism; AMP biosynthesis via de novo pathway; AMP from IMP: step 1/2. Its function is as follows. Plays an important role in the de novo pathway and in the salvage pathway of purine nucleotide biosynthesis. Catalyzes the first committed step in the biosynthesis of AMP from IMP. The protein is Adenylosuccinate synthetase of Saccharomyces cerevisiae (strain AWRI1631) (Baker's yeast).